The primary structure comprises 327 residues: Sugar transporter ERD6-like 9 (327 aa).

8 helical membrane passes run 26-46 (FLVFTTFIIVSASFSFGVALG), 68-88 (VFGSLLTFGGMIGALFSATIA), 102-122 (VFCISGWLAIALAKNIIWLDL), 125-145 (FFVGIGVGLLSYVVPVYIAEI), 152-172 (GTFTFSNQLLQNCGVATAYYL), 180-200 (IIALIGILPCLIQLVGLFFVP), 260-280 (LTIGIGLMLLQQLSGSAGLGY), and 295-315 (IGMTVLSIVVVPKAILGLILV).

This sequence belongs to the major facilitator superfamily. Sugar transporter (TC 2.A.1.1) family.

The protein resides in the membrane. Its function is as follows. Sugar transporter. The sequence is that of Sugar transporter ERD6-like 9 from Arabidopsis thaliana (Mouse-ear cress).